Reading from the N-terminus, the 402-residue chain is MKKEKRLFTSESVSEGHPDKVADQISDAILDAILAKDPDGRVACETTVTTGLVLVVGEISTSAYVDIQSVVRKTILEIGYNRPELGFDGNNCAILVDIDEQSSDIADGVNESLETRENQQDKDDLDKIGAGDQGLMFGFAIKETPELMPLPISLAHSLMRRVASLRKEGRLDWLRPDAKAQVTVEYDDENKPKRIDTVVISTQTDATVSNDEIREAMIDMVIKKVIPSQYLDKDTKFLINPSGRFVIGGPKGDSGLTGRKIIVDTYGGYARHGGGAFSGKDLTKVDRSASYAARYVAKNIVAAGLAYQCEIQLAYAIGVAHPVSIMVDTHGTSKVSEDLLVEAVRNVFDLRPAGIIEMLNLKRPIYRQTAAYGHFGRTDVDLPWEHTDKVEALKTYVSEHAE.

An ATP-binding site is contributed by His-17. Asp-19 provides a ligand contact to Mg(2+). Glu-45 contributes to the K(+) binding site. Glu-58 and Gln-101 together coordinate L-methionine. Residues 101-111 (QSSDIADGVNE) are flexible loop. ATP contacts are provided by residues 177 to 179 (DAK), 244 to 245 (RF), Asp-253, 259 to 260 (RK), Ala-276, and Lys-280. Asp-253 serves as a coordination point for L-methionine. Lys-284 provides a ligand contact to L-methionine.

The protein belongs to the AdoMet synthase family. Homotetramer; dimer of dimers. It depends on Mg(2+) as a cofactor. Requires K(+) as cofactor.

The protein resides in the cytoplasm. It catalyses the reaction L-methionine + ATP + H2O = S-adenosyl-L-methionine + phosphate + diphosphate. It participates in amino-acid biosynthesis; S-adenosyl-L-methionine biosynthesis; S-adenosyl-L-methionine from L-methionine: step 1/1. Catalyzes the formation of S-adenosylmethionine (AdoMet) from methionine and ATP. The overall synthetic reaction is composed of two sequential steps, AdoMet formation and the subsequent tripolyphosphate hydrolysis which occurs prior to release of AdoMet from the enzyme. The chain is S-adenosylmethionine synthase from Lactobacillus johnsonii (strain CNCM I-12250 / La1 / NCC 533).